Consider the following 376-residue polypeptide: 26S proteasome non-ATPase regulatory subunit 13 (376 aa).

The PCI domain occupies 171 to 338 (SYYKDALRFL…KRVHMTWVQP (168 aa)). Lys-298 bears the N6-acetyllysine mark.

Belongs to the proteasome subunit S11 family. Component of the 19S proteasome regulatory particle complex. The 26S proteasome consists of a 20S core particle (CP) and two 19S regulatory subunits (RP). The regulatory particle is made of a lid composed of 9 subunits including PSMD13, a base containing 6 ATPases and few additional components.

Component of the 26S proteasome, a multiprotein complex involved in the ATP-dependent degradation of ubiquitinated proteins. This complex plays a key role in the maintenance of protein homeostasis by removing misfolded or damaged proteins, which could impair cellular functions, and by removing proteins whose functions are no longer required. Therefore, the proteasome participates in numerous cellular processes, including cell cycle progression, apoptosis, or DNA damage repair. This Homo sapiens (Human) protein is 26S proteasome non-ATPase regulatory subunit 13 (PSMD13).